Here is a 748-residue protein sequence, read N- to C-terminus: Probable transcriptional regulator SLK1 (748 aa).

2 disordered regions span residues 67-93 and 138-163; these read QHLPQQQQQQLLQQQTGQGSVPMRENN and QQRLRQHQQMLQSMSPSQRLQLQQQQ. Positions 71–81 are enriched in low complexity; sequence QQQQQQLLQQQ. Residues 204–451 are dimerization; that stretch reads PAENCITYWR…EQKIGPIEGL (248 aa). A Nuclear localization signal motif is present at residues 213 to 227; the sequence is RKFVAEYFSPRAKQR. Over residues 572–587 the composition is skewed to polar residues; sequence NAMNNPNSNTGKQEGF. Disordered regions lie at residues 572–653 and 667–712; these read NAMN…GNTP and ENGG…NNSF. Residues 588–606 show a composition bias toward low complexity; sequence SSQNPTPNSNQSPSSSSQQ. The segment covering 615-653 has biased composition (polar residues); sequence FPNSPQMQQQQRTMNGPTNILPQNHPHQLQSPHSHGNTP. Over residues 667 to 686 the composition is skewed to low complexity; it reads ENGGSVQQQQAFSGQSGSNS. Polar residues predominate over residues 687–699; sequence NAERNTTASTSNI.

This sequence belongs to the adn1/SEU family. As to quaternary structure, forms corepressor complexes with LUH; LUH is the transcription repressor subunit and SLK1 the specific DNA-binding adapters. As to expression, expressed in young flower meristems, ovules and the carpel margin meristem.

It localises to the nucleus. Probable transcription regulator that functions in the development of the carpel margin meristem similarly to SEUSS (SEU). In association with SEU, supports organ development from meristematic regions by facilitating auxin response and thus organ initiation, and by sustaining meristematic potential through the maintenance of PHABULOSA expression. DNA-binding adapter subunit of the SEU-SLK1 transcriptional corepressor of abiotic stress (e.g. salt and osmotic stress) response genes. The protein is Probable transcriptional regulator SLK1 (SLK1) of Arabidopsis thaliana (Mouse-ear cress).